The chain runs to 250 residues: Mycofactocin precursor peptide peptidase (250 aa).

Positions 38, 40, 49, 127, and 166 each coordinate a divalent metal cation.

The protein belongs to the creatininase superfamily. As to quaternary structure, homooctamer. Requires Fe(2+) as cofactor. It depends on Zn(2+) as a cofactor.

It catalyses the reaction [mycofactocin precursor peptide]-C-terminal glycyl-N-{5-[(4-hydroxyphenyl)methyl]-4,4-dimethyl-2-oxopyrrolidin-3-yl}acetamide + H2O = [mycofactocin precursor peptide]-C-terminal glycine + 3-amino-5-[(4-hydroxyphenyl)methyl]-4,4-dimethyl-2-pyrrolidin-2-one. In terms of biological role, peptidase involved in the biosynthesis of the enzyme cofactor mycofactocin (MFT). Catalyzes cleavage of the MftC-modified MftA peptide to liberate its final two residues, which consist of a cross-linked valine-decarboxylated tyrosine dipeptide (named 3-amino-5-[(4-hydroxyphenyl)methyl]-4,4-dimethyl-2-pyrrolidin-2-one or ADHP). This is Mycofactocin precursor peptide peptidase from Mycobacterium ulcerans (strain Agy99).